We begin with the raw amino-acid sequence, 91 residues long: UPF0250 protein Lcho_4239 (91 aa).

This sequence belongs to the UPF0250 family.

The polypeptide is UPF0250 protein Lcho_4239 (Leptothrix cholodnii (strain ATCC 51168 / LMG 8142 / SP-6) (Leptothrix discophora (strain SP-6))).